Here is a 234-residue protein sequence, read N- to C-terminus: Ribose-5-phosphate isomerase A (234 aa).

Substrate is bound by residues 35 to 38 (SGTT), 91 to 94 (DGAD), and 105 to 108 (KGGG). The Proton acceptor role is filled by Glu-114. Lys-132 lines the substrate pocket.

It belongs to the ribose 5-phosphate isomerase family. Homodimer.

The enzyme catalyses aldehydo-D-ribose 5-phosphate = D-ribulose 5-phosphate. It functions in the pathway carbohydrate degradation; pentose phosphate pathway; D-ribose 5-phosphate from D-ribulose 5-phosphate (non-oxidative stage): step 1/1. Its function is as follows. Catalyzes the reversible conversion of ribose-5-phosphate to ribulose 5-phosphate. This Methanococcus aeolicus (strain ATCC BAA-1280 / DSM 17508 / OCM 812 / Nankai-3) protein is Ribose-5-phosphate isomerase A.